The following is a 103-amino-acid chain: Preprofallaxidin-6 (103 aa).

Positions 1-22 (MASLKKSLFLVLFLGFVSLSIC) are cleaved as a signal peptide. The propeptide occupies 23–49 (EEEKRENEGNENEEEDENHEEGSEEKR). The interval 24–50 (EEKRENEGNENEEEDENHEEGSEEKRG) is disordered. Residues 31–41 (GNENEEEDENH) are compositionally biased toward acidic residues. Position 65 is a leucine amide (Leu65). A disordered region spans residues 67–103 (KRSEEKRYHPFGKRSEEKRYHPFGKRSEEKRYPPIGK). A propeptide spanning residues 69 to 73 (SEEKR) is cleaved from the precursor. Phe77 bears the Phenylalanine amide mark. Positions 81–85 (SEEKR) are excised as a propeptide. Position 89 is a phenylalanine amide (Phe89). Positions 93-97 (SEEKR) are excised as a propeptide. At Ile101 the chain carries Isoleucine amide.

It belongs to the frog skin active peptide (FSAP) family. Brevinin subfamily. As to expression, expressed by the skin glands.

It is found in the secreted. Functionally, fallaxidin-1.3 shows no antibacterial activity against Gram-positive or Gram-negative bacteria. Does not inhibit the formation of NO by neuronal nitric oxide synthase. Has no effect on splenocyte proliferation or smooth muscle contraction. Fallaxidin-1.4 shows no antibacterial activity against Gram-positive or Gram-negative bacteria. Does not inhibit the formation of NO by neuronal nitric oxide synthase. Has no effect on splenocyte proliferation or smooth muscle contraction. Its function is as follows. Fallaxidin-3.1 shows antibacterial activity against the Gram-positive bacteria E.faecalis (MIC=100 uM) and L.lactis (MIC=100 uM). No antibacterial activity against the Gram-positive bacteria B.cereus, L.innocua, M.luteus, S.epidermidis, S.uberis and S.aureus, or the Gram-negative bacteria E.cloacae and E.coli. The sequence is that of Preprofallaxidin-6 from Litoria fallax (Eastern dwarf tree frog).